A 127-amino-acid polypeptide reads, in one-letter code: MIRNALLVLVFVLIGTISAATDADMTTDSGKQPSNINQLTLVSPEGKRLLRQGSVKEGGVHDATEERAFIVTPLKNSLYRILAAFGLKPQTLYVQLGIRTGMANALYNRLYHSYHRWYATYGPRVYG.

Residues 1-19 form the signal peptide; the sequence is MIRNALLVLVFVLIGTISA. The RxLR-dEER signature appears at 48-67; sequence RLLRQGSVKEGGVHDATEER.

This sequence belongs to the RxLR effector family.

Its subcellular location is the secreted. It is found in the host cell. Effector that is involved in host plant infection. Contributes to virulence during the early infection stage, by inhibiting plant defense responses induced by both PAMP-triggered immunity (PTI) and effector-triggered immunity (ETI). The polypeptide is RxLR effector protein CRE6 (Phytophthora infestans (strain T30-4) (Potato late blight agent)).